A 314-amino-acid chain; its full sequence is Olfactory receptor 5P51 (314 aa).

Residues 1–28 (MAFLEDGNHTAVTEFVLFGLTDDPVLRV) are Extracellular-facing. A glycan (N-linked (GlcNAc...) asparagine) is linked at N8. Residues 29–49 (ILFIIFLCIYLVNVSGNLSTI) traverse the membrane as a helical segment. At 50 to 57 (LLIRVSSQ) the chain is on the cytoplasmic side. A helical membrane pass occupies residues 58–78 (LHHPMYFFLSHLASVDVGYSS). Topologically, residues 79 to 102 (TVTPKMLANFLLERSTISYLGCTI) are extracellular. C100 and C192 form a disulfide bridge. The chain crosses the membrane as a helical span at residues 103–123 (QLFSGAFVGTLECFLLATMAY). Residues 124–136 (DRFIAICNPLLYS) are Cytoplasmic-facing. The chain crosses the membrane as a helical span at residues 137–157 (TKMSTQVCIQLLVGSYIGGFL). Over 158–199 (NASSFLLSFFPLLFCGPNRVNHYSCDLTPLIELSCSGSNVPI) the chain is Extracellular. Residues 200 to 220 (VPASFCSAFVIIVTVSVIAIS) form a helical membrane-spanning segment. The Cytoplasmic segment spans residues 221–240 (YTYILITILKMRSTEGRQKA). The chain crosses the membrane as a helical span at residues 241–261 (FSTCTSHLTAVTLYYGTVTFI). The Extracellular portion of the chain corresponds to 262-274 (YVMPKSSYSTDQN). A helical membrane pass occupies residues 275 to 295 (KVVSVFYTVVIPMLNPIIYSL). The Cytoplasmic segment spans residues 296 to 314 (RNNEIKGALKRQLARKIFS).

Belongs to the G-protein coupled receptor 1 family.

It is found in the cell membrane. In terms of biological role, potential odorant receptor. In Mus musculus (Mouse), this protein is Olfactory receptor 5P51.